The primary structure comprises 608 residues: Glutamine--fructose-6-phosphate aminotransferase [isomerizing] (608 aa).

Cysteine 2 functions as the Nucleophile; for GATase activity in the catalytic mechanism. The 216-residue stretch at 2 to 217 (CGIVGILGRG…DGDWAVLTRA (216 aa)) folds into the Glutamine amidotransferase type-2 domain. SIS domains follow at residues 284 to 423 (LPFD…ERGK) and 456 to 598 (LARY…VDQP). The active-site For Fru-6P isomerization activity is the lysine 603.

It localises to the cytoplasm. It carries out the reaction D-fructose 6-phosphate + L-glutamine = D-glucosamine 6-phosphate + L-glutamate. Its function is as follows. Involved in the production of the root hair deformation (HAD) factor specifically on soybean. This is Glutamine--fructose-6-phosphate aminotransferase [isomerizing] (nodM) from Bradyrhizobium diazoefficiens (strain JCM 10833 / BCRC 13528 / IAM 13628 / NBRC 14792 / USDA 110).